Here is a 730-residue protein sequence, read N- to C-terminus: ABC transporter G family member 3 (730 aa).

Over residues 1–28 (MEEIQSQSDLYRSSSSSASSPTSRVPSS) the composition is skewed to low complexity. The interval 1–100 (MEEIQSQSDL…MASPPVPEGG (100 aa)) is disordered. Residues 47 to 56 (DSPEWEDTPD) are compositionally biased toward acidic residues. Over residues 72 to 91 (NDATTTPVSPSLSKMNSGSM) the composition is skewed to polar residues. At Ser93 the chain carries Phosphoserine. The region spanning 114–356 (IAWKDLTVTM…FSNAGFPCPI (243 aa)) is the ABC transporter domain. Residue 151–158 (GPAKSGKS) coordinates ATP. The 213-residue stretch at 441 to 653 (TRVAVLTWRS…SIEGLLENEY (213 aa)) folds into the ABC transmembrane type-2 domain. 6 helical membrane-spanning segments follow: residues 465–485 (LILY…LGHS), 495–515 (AVFV…PSLL), 532–552 (AFVF…LMSI), 575–595 (VLNF…IACI), 600–620 (YWST…AGHF), and 689–709 (MLVL…LLRF).

It belongs to the ABC transporter superfamily. ABCG family. Eye pigment precursor importer (TC 3.A.1.204) subfamily.

The protein localises to the membrane. This Arabidopsis thaliana (Mouse-ear cress) protein is ABC transporter G family member 3 (ABCG3).